We begin with the raw amino-acid sequence, 257 residues long: MVQVKAIKAFSDNYIWCLTTSNNTQAWVVDPGQAEPVLDYLAQHNLTLAGILITHHHYDHTDGVAKLVSENPNIAVYGPTNSPFKGITQQLTDGQSITVLNTAFNIIATPGHTLDHICYVNEQLAFTGDTLFSGGCGRLFEGSAEQMWHSFNKLRELPADCKVYCTHEYTQANLAFATAIEPRNPELLAYSKRVDELRSKNEITLPSTIGQELKINPFMRSDLPNITELLPKEFCSVTKNNEPWENFAGLRKFKDHF.

His55, His57, Asp59, His60, His112, Asp129, and His167 together coordinate Zn(2+).

It belongs to the metallo-beta-lactamase superfamily. Glyoxalase II family. In terms of assembly, monomer. Zn(2+) is required as a cofactor.

The enzyme catalyses an S-(2-hydroxyacyl)glutathione + H2O = a 2-hydroxy carboxylate + glutathione + H(+). It participates in secondary metabolite metabolism; methylglyoxal degradation; (R)-lactate from methylglyoxal: step 2/2. Its function is as follows. Thiolesterase that catalyzes the hydrolysis of S-D-lactoyl-glutathione to form glutathione and D-lactic acid. The chain is Hydroxyacylglutathione hydrolase from Pseudoalteromonas translucida (strain TAC 125).